Consider the following 70-residue polypeptide: Putative membrane protein insertion efficiency factor (70 aa).

It belongs to the UPF0161 family.

It is found in the cell inner membrane. Functionally, could be involved in insertion of integral membrane proteins into the membrane. The polypeptide is Putative membrane protein insertion efficiency factor (Francisella tularensis subsp. tularensis (strain SCHU S4 / Schu 4)).